The sequence spans 2624 residues: Transcription factor TFIIIB component B'' homolog (2624 aa).

The disordered stretch occupies residues 1–142 (MFRRARLSVK…TKEKQPCSDR (142 aa)). An interaction with ZBTB43 region spans residues 1–299 (MFRRARLSVK…TYSSFRKNYY (299 aa)). Over residues 63–77 (PQEKAPRSSTEKTGG) the composition is skewed to basic and acidic residues. The segment covering 99-119 (SSTSSLVKSSVSVPSESHPLS) has biased composition (low complexity). The span at 120 to 132 (TINQEAPQPTATS) shows a compositional bias: polar residues. Residues 133–142 (TKEKQPCSDR) show a composition bias toward basic and acidic residues. The stretch at 144–177 (RIYKAQKLREMLKEELRKEKKQWKNKYAINESQR) forms a coiled coil. A disordered region spans residues 193–241 (LPDNNPMTSSLEQEKKTEKPSTPVQTREQEGKSTPNAEDNEMEEETDDG). Over residues 212–229 (PSTPVQTREQEGKSTPNA) the composition is skewed to polar residues. A compositionally biased stretch (acidic residues) spans 230–240 (EDNEMEEETDD). Positions 295–345 (RKNYYSKPWSNKETDMFFLAISMVGTDFSMIGQLFPHRARIEIKNKFKREE) constitute a Myb-like domain. The interval 355-470 (AFQEKRPFDF…QKKRRRKKQD (116 aa)) is required for phosphorylation by CSNK2A1. 4 disordered regions span residues 379-449 (EKRK…SRED), 544-567 (LSLS…TSDL), 606-663 (ENVK…MNTL), and 729-759 (EEIG…SRKD). The segment covering 397-407 (TKPRKNVKVKK) has biased composition (basic residues). The segment covering 552 to 565 (ATSVATESSESSTS) has biased composition (low complexity). Composition is skewed to basic and acidic residues over residues 637 to 663 (TESE…MNTL) and 736 to 759 (EKNE…SRKD). Residues 823–877 (GRREISSKEEVLEKILVSGEMAAALRETVRLDTSPKEMVPAEINTKEMQSDLKET) form a 1; approximate repeat. Residues 823 to 1327 (GRREISSKEE…PRENELEETS (505 aa)) are 9 X 55 AA repeats of G-R-R-X-I-S-P-X-E-N-G-X-E-E-V-K-P-X-X-E-M-E-T-D-L-K-X-T-G-R-E-X-X-X-R-E-K-T-X-E-X-X-D-A-X-E-E-I-D-X-D-L-E-E-T. 6 consecutive repeat copies span residues 878 to 932 (GRRA…LEEA), 933 to 987 (GRRE…LEET), 988 to 1040 (GRRK…LEET), 1041 to 1094 (EREV…LEET), 1095 to 1148 (EREI…LEET), and 1149 to 1203 (GRRE…LEET). T915 carries the phosphothreonine modification. Composition is skewed to basic and acidic residues over residues 930-957 (EEAG…ETDL) and 979-1006 (EIDK…KPVD). The segment at 930 to 1222 (EEAGRREISP…GPEEVKPVGK (293 aa)) is disordered. Over residues 1030-1041 (DATEEIDLEETE) the composition is skewed to acidic residues. Residues 1052-1079 (EEVKPLGEMETDLKATGRDSFPRGKTPE) show a composition bias toward basic and acidic residues. A coiled-coil region spans residues 1078-1103 (PEVIDAIEEIEIDLEETEREISPQEN). Acidic residues predominate over residues 1082–1095 (DAIEEIEIDLEETE). The segment covering 1120–1133 (ATGREISPREKTPE) has biased composition (basic and acidic residues). Residues 1136-1145 (DATEEIDKDL) show a composition bias toward acidic residues. Residues 1161 to 1190 (EEVKPVDEMETDLKTTGREGSSREKTREVI) show a composition bias toward basic and acidic residues. The segment covering 1194 to 1204 (EVIETDLEETE) has biased composition (acidic residues). The 8; approximate repeat unit spans residues 1204–1257 (EREISPQENGPEEVKPVGKMETDLKEIREEISQREKVLAEFSAIREKEIDLKET). Residues 1223–1284 (METDLKEIRE…VEEMEADLKE (62 aa)) are a coiled coil. A 9; approximate repeat occupies 1258–1327 (GKRDIPIMEK…PRENELEETS (70 aa)). Positions 1306–1321 (AELKQTGKTDISPREN) are enriched in basic and acidic residues. Disordered regions lie at residues 1306-1348 (AELK…SAVP), 1365-1440 (TPVE…RFKR), 1519-1543 (TERN…VQKN), 1684-1722 (KAKP…LQKG), 1819-1863 (STSE…ASKA), 2130-2164 (GAEM…ENKD), 2181-2200 (SEVN…QEVH), 2207-2241 (VASS…GDSV), 2444-2501 (FQSR…SRPG), and 2519-2566 (SDEP…PSPS). Over residues 1326 to 1344 (TSTSRQTDTHLMQSGSNDF) the composition is skewed to polar residues. Basic and acidic residues predominate over residues 1366 to 1378 (PVEEKRNSEKEVS). Polar residues-rich tracts occupy residues 1379–1390 (SHFSHFKISSQT), 1411–1421 (SDINLSKSLPQ), and 1519–1529 (TERNLSPSNSC). Residues 1695–1719 (KKEEPVLEKVTTDQSKEGKPEDHLL) show a composition bias toward basic and acidic residues. The span at 1844 to 1853 (RGSKRVRGKT) shows a compositional bias: basic residues. Over residues 2131 to 2151 (AEMETQRETEKNASKATELEN) the composition is skewed to basic and acidic residues. Positions 2470 to 2479 (VSDKEERTDA) are enriched in basic and acidic residues. The span at 2488–2498 (SRTSSSKASLS) shows a compositional bias: low complexity. Over residues 2526-2544 (HSKKRLKPLIPGLRKKLKR) the composition is skewed to basic residues.

In terms of assembly, component of TFIIIB complex. The TFIIIB complex has two activities, alpha and beta. The TFIIIB-alpha and TFIIIB-beta activities are required for transcription of genes with TFIIIC-bound internal promoters and PSE transcription factor-bound external promoters, respectively. The TFIIIB-alpha activity complex is composed of TBP, BDP1, and a complex containing both BRF2 and at least four stably associated proteins; YY1 facilitates the formation of TFIIIB-alpha activity complex. The TFIIIB-beta activity complex is composed of TBP, BDP1, and BRF1. Interacts with BRF1; this interaction diminishes during mitosis resulting in the release of BDP1 from chromosomal templates. Component of TFIIIC complex. The TFIIIC complex has two activities, C1 and C2. The TFIIIC2 activity complex is only required for transcription of the 'classical' pol III genes whereas the TFIIIC1 activity complex is required for transcription of all pol III genes. The TFIIIC1 activity complex is composed at least of BDP1. Interacts with ZBTB43. In terms of processing, phosphorylated by CSNK2A1 during mitosis, resulting in its release from chromatin and suppression of polymerase III transcription. Isoform 2 is highly expressed in cerebellum.

The protein localises to the nucleus. Functionally, general activator of RNA polymerase III transcription. Requires for transcription from all three types of polymerase III promoters. Requires for transcription of genes with internal promoter elements and with promoter elements upstream of the initiation site. This chain is Transcription factor TFIIIB component B'' homolog (BDP1), found in Homo sapiens (Human).